The following is a 430-amino-acid chain: Histidinol dehydrogenase (430 aa).

NAD(+)-binding residues include Y130, Q191, and N214. Positions 237, 259, and 262 each coordinate substrate. Residues Q259 and H262 each contribute to the Zn(2+) site. Active-site proton acceptor residues include E327 and H328. Residues H328, D361, E415, and H420 each contribute to the substrate site. D361 is a binding site for Zn(2+). Residue H420 coordinates Zn(2+).

The protein belongs to the histidinol dehydrogenase family. The cofactor is Zn(2+).

It carries out the reaction L-histidinol + 2 NAD(+) + H2O = L-histidine + 2 NADH + 3 H(+). It functions in the pathway amino-acid biosynthesis; L-histidine biosynthesis; L-histidine from 5-phospho-alpha-D-ribose 1-diphosphate: step 9/9. Functionally, catalyzes the sequential NAD-dependent oxidations of L-histidinol to L-histidinaldehyde and then to L-histidine. In Zymomonas mobilis subsp. mobilis (strain ATCC 31821 / ZM4 / CP4), this protein is Histidinol dehydrogenase (hisD).